Reading from the N-terminus, the 150-residue chain is Ribosomal RNA large subunit methyltransferase H (150 aa).

S-adenosyl-L-methionine contacts are provided by residues Ala100 and 118-123 (LSEMTF).

It belongs to the RNA methyltransferase RlmH family. Homodimer.

It localises to the cytoplasm. It carries out the reaction pseudouridine(1915) in 23S rRNA + S-adenosyl-L-methionine = N(3)-methylpseudouridine(1915) in 23S rRNA + S-adenosyl-L-homocysteine + H(+). Specifically methylates the pseudouridine at position 1915 (m3Psi1915) in 23S rRNA. This is Ribosomal RNA large subunit methyltransferase H from Helicobacter pylori (strain ATCC 700392 / 26695) (Campylobacter pylori).